An 80-amino-acid chain; its full sequence is MTMDDTKATVLSILADLTGEDVSSNMDVNLFDEGILDSMGSVQLLLELQNQLGIEVPVSEFQRSEWDTPAKIVAKVENLQ.

Residues 1 to 80 enclose the Carrier domain; the sequence is MTMDDTKATV…KIVAKVENLQ (80 aa). Ser38 carries the post-translational modification O-(pantetheine 4'-phosphoryl)serine.

It belongs to the DltC family. In terms of processing, 4'-phosphopantetheine is transferred from CoA to a specific serine of apo-DCP.

The protein resides in the cytoplasm. It functions in the pathway cell wall biogenesis; lipoteichoic acid biosynthesis. Carrier protein involved in the D-alanylation of lipoteichoic acid (LTA). The loading of thioester-linked D-alanine onto DltC is catalyzed by D-alanine--D-alanyl carrier protein ligase DltA. The DltC-carried D-alanyl group is further transferred to cell membrane phosphatidylglycerol (PG) by forming an ester bond, probably catalyzed by DltD. D-alanylation of LTA plays an important role in modulating the properties of the cell wall in Gram-positive bacteria, influencing the net charge of the cell wall. The chain is D-alanyl carrier protein 1 from Lactiplantibacillus plantarum (strain ATCC BAA-793 / NCIMB 8826 / WCFS1) (Lactobacillus plantarum).